Reading from the N-terminus, the 147-residue chain is Hemoglobin subunit beta (147 aa).

One can recognise a Globin domain in the interval 2-147; it reads DWTDAERAAI…VVSALGRQYH (146 aa). Positions 63 and 92 each coordinate heme b.

The protein belongs to the globin family. In terms of assembly, heterotetramer of two alpha chains and two beta chains. In terms of tissue distribution, red blood cells.

In terms of biological role, involved in oxygen transport from gills to the various peripheral tissues. The protein is Hemoglobin subunit beta (hbb) of Leiostomus xanthurus (Spot).